The following is a 249-amino-acid chain: DNA polymerase sliding clamp (249 aa).

It belongs to the PCNA family. In terms of assembly, homotrimer. The subunits circularize to form a toroid; DNA passes through its center. Replication factor C (RFC) is required to load the toroid on the DNA.

Its function is as follows. Sliding clamp subunit that acts as a moving platform for DNA processing. Responsible for tethering the catalytic subunit of DNA polymerase and other proteins to DNA during high-speed replication. This is DNA polymerase sliding clamp from Methanococcus vannielii (strain ATCC 35089 / DSM 1224 / JCM 13029 / OCM 148 / SB).